The chain runs to 633 residues: 1-deoxy-D-xylulose-5-phosphate synthase (633 aa).

Positions 1 to 12 (MSEPTANLQPAS) are enriched in polar residues. Residues 1–21 (MSEPTANLQPASRTPLLDRVN) form a disordered region. Thiamine diphosphate-binding positions include His86 and 127 to 129 (GHA). Asp158 serves as a coordination point for Mg(2+). Residues 159–160 (GS), Asn187, and Glu377 each bind thiamine diphosphate. Asn187 serves as a coordination point for Mg(2+).

It belongs to the transketolase family. DXPS subfamily. As to quaternary structure, homodimer. Requires Mg(2+) as cofactor. The cofactor is thiamine diphosphate.

The enzyme catalyses D-glyceraldehyde 3-phosphate + pyruvate + H(+) = 1-deoxy-D-xylulose 5-phosphate + CO2. It participates in metabolic intermediate biosynthesis; 1-deoxy-D-xylulose 5-phosphate biosynthesis; 1-deoxy-D-xylulose 5-phosphate from D-glyceraldehyde 3-phosphate and pyruvate: step 1/1. Its function is as follows. Catalyzes the acyloin condensation reaction between C atoms 2 and 3 of pyruvate and glyceraldehyde 3-phosphate to yield 1-deoxy-D-xylulose-5-phosphate (DXP). This Deinococcus geothermalis (strain DSM 11300 / CIP 105573 / AG-3a) protein is 1-deoxy-D-xylulose-5-phosphate synthase.